The sequence spans 394 residues: Probable pectate lyase 16 (394 aa).

Positions 1 to 22 (MTLFTVSCLLVVLFLCHSLVHA) are cleaved as a signal peptide. 3 residues coordinate Ca(2+): Asp192, Asp216, and Asp220. Residue Arg272 is part of the active site.

This sequence belongs to the polysaccharide lyase 1 family. Ca(2+) is required as a cofactor.

The enzyme catalyses Eliminative cleavage of (1-&gt;4)-alpha-D-galacturonan to give oligosaccharides with 4-deoxy-alpha-D-galact-4-enuronosyl groups at their non-reducing ends.. Its pathway is glycan metabolism; pectin degradation; 2-dehydro-3-deoxy-D-gluconate from pectin: step 2/5. This Arabidopsis thaliana (Mouse-ear cress) protein is Probable pectate lyase 16.